The chain runs to 189 residues: Casparian strip membrane protein 1 (189 aa).

The Cytoplasmic segment spans residues 1–42 (MEKNESSAIEIAESSKERKGKAPLLAAAVGHDRAAGYKRGVS). The chain crosses the membrane as a helical span at residues 43–63 (IFDLILRISAATAALAATIVM). Residues 64–90 (GTTEQTLPFFTQFFQFRAQYDDLPTFT) lie on the Extracellular side of the membrane. Residues 91 to 111 (FFVVGMAIVTGYLILSVPLSI) form a helical membrane-spanning segment. Over 112–130 (VCIARPVAIGPRFLLIVCD) the chain is Cytoplasmic. Residues 131-151 (TVTAVLATSAAGSSAAIVYLA) traverse the membrane as a helical segment. At 152-189 (HNGNSDANWLAICQQFNDFCQRVSGAVVAAFVAVVCSS) the chain is on the extracellular side.

This sequence belongs to the Casparian strip membrane proteins (CASP) family. Homodimer and heterodimers.

It localises to the cell membrane. Its function is as follows. Regulates membrane-cell wall junctions and localized cell wall deposition. Required for establishment of the Casparian strip membrane domain (CSD) and the subsequent formation of Casparian strips, a cell wall modification of the root endodermis that determines an apoplastic barrier between the intraorganismal apoplasm and the extraorganismal apoplasm and prevents lateral diffusion. The polypeptide is Casparian strip membrane protein 1 (Striga asiatica (Asiatic witchweed)).